We begin with the raw amino-acid sequence, 173 residues long: Cytidylate kinase (173 aa).

Glycine 7–threonine 15 contacts ATP.

It belongs to the cytidylate kinase family. Type 2 subfamily.

It is found in the cytoplasm. It catalyses the reaction CMP + ATP = CDP + ADP. The enzyme catalyses dCMP + ATP = dCDP + ADP. The polypeptide is Cytidylate kinase (Methanosphaera stadtmanae (strain ATCC 43021 / DSM 3091 / JCM 11832 / MCB-3)).